The sequence spans 208 residues: Uracil phosphoribosyltransferase (208 aa).

Residues R78, R103, and 130–138 (DPMLAIGGS) each bind 5-phospho-alpha-D-ribose 1-diphosphate. Uracil is bound by residues I193 and 198–200 (GDA). Position 199 (D199) interacts with 5-phospho-alpha-D-ribose 1-diphosphate.

The protein belongs to the UPRTase family. Mg(2+) serves as cofactor.

The enzyme catalyses UMP + diphosphate = 5-phospho-alpha-D-ribose 1-diphosphate + uracil. The protein operates within pyrimidine metabolism; UMP biosynthesis via salvage pathway; UMP from uracil: step 1/1. Its activity is regulated as follows. Allosterically activated by GTP. Functionally, catalyzes the conversion of uracil and 5-phospho-alpha-D-ribose 1-diphosphate (PRPP) to UMP and diphosphate. This is Uracil phosphoribosyltransferase from Vibrio cholerae serotype O1 (strain ATCC 39315 / El Tor Inaba N16961).